A 75-amino-acid polypeptide reads, in one-letter code: UPF0235 protein Mflv_3569 (75 aa).

It belongs to the UPF0235 family.

The protein is UPF0235 protein Mflv_3569 of Mycolicibacterium gilvum (strain PYR-GCK) (Mycobacterium gilvum (strain PYR-GCK)).